The following is a 344-amino-acid chain: Dihydroorotase (344 aa).

Positions 14 and 16 each coordinate Zn(2+). Residues 16-18 (HFR) and Asn42 each bind substrate. The Zn(2+) site is built by Lys100, His137, and His175. Lys100 bears the N6-carboxylysine mark. Position 137 (His137) interacts with substrate. Leu220 provides a ligand contact to substrate. Asp248 contributes to the Zn(2+) binding site. Asp248 is a catalytic residue. Positions 252 and 264 each coordinate substrate.

Belongs to the metallo-dependent hydrolases superfamily. DHOase family. Class II DHOase subfamily. Homodimer. Zn(2+) is required as a cofactor.

The catalysed reaction is (S)-dihydroorotate + H2O = N-carbamoyl-L-aspartate + H(+). The protein operates within pyrimidine metabolism; UMP biosynthesis via de novo pathway; (S)-dihydroorotate from bicarbonate: step 3/3. In terms of biological role, catalyzes the reversible cyclization of carbamoyl aspartate to dihydroorotate. This Erythrobacter litoralis (strain HTCC2594) protein is Dihydroorotase.